Here is a 963-residue protein sequence, read N- to C-terminus: Glycine dehydrogenase (decarboxylating) (963 aa).

The residue at position 707 (Lys707) is an N6-(pyridoxal phosphate)lysine.

It belongs to the GcvP family. As to quaternary structure, the glycine cleavage system is composed of four proteins: P, T, L and H. Pyridoxal 5'-phosphate serves as cofactor.

It catalyses the reaction N(6)-[(R)-lipoyl]-L-lysyl-[glycine-cleavage complex H protein] + glycine + H(+) = N(6)-[(R)-S(8)-aminomethyldihydrolipoyl]-L-lysyl-[glycine-cleavage complex H protein] + CO2. The glycine cleavage system catalyzes the degradation of glycine. The P protein binds the alpha-amino group of glycine through its pyridoxal phosphate cofactor; CO(2) is released and the remaining methylamine moiety is then transferred to the lipoamide cofactor of the H protein. This chain is Glycine dehydrogenase (decarboxylating), found in Dechloromonas aromatica (strain RCB).